Reading from the N-terminus, the 692-residue chain is Elongation factor G (692 aa).

A tr-type G domain is found at 8 to 282; that stretch reads EKTRNIGIMA…AVLDYLPAPT (275 aa). GTP is bound by residues 17–24, 81–85, and 135–138; these read AHIDAGKT, DTPGH, and NKMD. Residues Ser213, Ser302, Ser569, and Ser680 each carry the phosphoserine modification.

Belongs to the TRAFAC class translation factor GTPase superfamily. Classic translation factor GTPase family. EF-G/EF-2 subfamily. In terms of processing, phosphorylated on threonine residue(s). Phosphorylated by PrkC and dephosphorylated by PrpC, in vitro.

The protein localises to the cytoplasm. Catalyzes the GTP-dependent ribosomal translocation step during translation elongation. During this step, the ribosome changes from the pre-translocational (PRE) to the post-translocational (POST) state as the newly formed A-site-bound peptidyl-tRNA and P-site-bound deacylated tRNA move to the P and E sites, respectively. Catalyzes the coordinated movement of the two tRNA molecules, the mRNA and conformational changes in the ribosome. The sequence is that of Elongation factor G (fusA) from Bacillus subtilis (strain 168).